We begin with the raw amino-acid sequence, 416 residues long: PDZ and LIM domain protein 7 (416 aa).

Positions 1 to 85 (MESYKVMLNG…RLCLTLSRAQ (85 aa)) constitute a PDZ domain. Disordered stretches follow at residues 145 to 191 (CTPQ…AVDP) and 202 to 221 (TSTVLSKHSQPATPTPMQNR). Positions 168–181 (PGLAPRTPAATPGP) are enriched in low complexity. LIM zinc-binding domains are found at residues 239-297 (PLCY…TRYA), 298-357 (PSCA…MFGT), and 358-416 (KCRG…FSHV).

In terms of assembly, interacts with various PKC isoforms through the LIM zinc-binding domains. Interacts with TPM2. Interacts with TBX4 and TBX5.

It localises to the cytoplasm. The protein resides in the cytoskeleton. Its subcellular location is the myofibril. The protein localises to the sarcomere. It is found in the z line. In terms of biological role, may function as a scaffold on which the coordinated assembly of proteins can occur. May play a role as an adapter that, via its PDZ domain, localizes LIM-binding proteins to actin filaments of both skeletal muscle and nonmuscle tissues. May be involved in bone formation. The chain is PDZ and LIM domain protein 7 (PDLIM7) from Gallus gallus (Chicken).